The chain runs to 339 residues: Ketol-acid reductoisomerase (NADP(+)) (339 aa).

Residues 1 to 182 (MRVYYDRDAD…GGGRAGIIET (182 aa)) enclose the KARI N-terminal Rossmann domain. Residues 24–27 (YGSQ), R48, S51, T53, and 83–86 (DELQ) contribute to the NADP(+) site. H108 is an active-site residue. G134 contributes to the NADP(+) binding site. One can recognise a KARI C-terminal knotted domain in the interval 183 to 328 (TFKEECETDL…AELRAMMPWI (146 aa)). Residues D191, E195, E227, and E231 each contribute to the Mg(2+) site. Position 252 (S252) interacts with substrate.

This sequence belongs to the ketol-acid reductoisomerase family. It depends on Mg(2+) as a cofactor.

The catalysed reaction is (2R)-2,3-dihydroxy-3-methylbutanoate + NADP(+) = (2S)-2-acetolactate + NADPH + H(+). The enzyme catalyses (2R,3R)-2,3-dihydroxy-3-methylpentanoate + NADP(+) = (S)-2-ethyl-2-hydroxy-3-oxobutanoate + NADPH + H(+). The protein operates within amino-acid biosynthesis; L-isoleucine biosynthesis; L-isoleucine from 2-oxobutanoate: step 2/4. It participates in amino-acid biosynthesis; L-valine biosynthesis; L-valine from pyruvate: step 2/4. In terms of biological role, involved in the biosynthesis of branched-chain amino acids (BCAA). Catalyzes an alkyl-migration followed by a ketol-acid reduction of (S)-2-acetolactate (S2AL) to yield (R)-2,3-dihydroxy-isovalerate. In the isomerase reaction, S2AL is rearranged via a Mg-dependent methyl migration to produce 3-hydroxy-3-methyl-2-ketobutyrate (HMKB). In the reductase reaction, this 2-ketoacid undergoes a metal-dependent reduction by NADPH to yield (R)-2,3-dihydroxy-isovalerate. The protein is Ketol-acid reductoisomerase (NADP(+)) of Beijerinckia indica subsp. indica (strain ATCC 9039 / DSM 1715 / NCIMB 8712).